Consider the following 119-residue polypeptide: Large ribosomal subunit protein uL22 (119 aa).

The protein belongs to the universal ribosomal protein uL22 family. Part of the 50S ribosomal subunit.

Functionally, this protein binds specifically to 23S rRNA; its binding is stimulated by other ribosomal proteins, e.g. L4, L17, and L20. It is important during the early stages of 50S assembly. It makes multiple contacts with different domains of the 23S rRNA in the assembled 50S subunit and ribosome. Its function is as follows. The globular domain of the protein is located near the polypeptide exit tunnel on the outside of the subunit, while an extended beta-hairpin is found that lines the wall of the exit tunnel in the center of the 70S ribosome. The sequence is that of Large ribosomal subunit protein uL22 from Chlorobium chlorochromatii (strain CaD3).